The sequence spans 84 residues: Small ribosomal subunit protein uS17 (84 aa).

Belongs to the universal ribosomal protein uS17 family. Part of the 30S ribosomal subunit.

Functionally, one of the primary rRNA binding proteins, it binds specifically to the 5'-end of 16S ribosomal RNA. This is Small ribosomal subunit protein uS17 from Buchnera aphidicola subsp. Cinara cedri (strain Cc).